Consider the following 86-residue polypeptide: Serine protease inhibitor Kazal-type 4 (86 aa).

The first 26 residues, 1–26, serve as a signal peptide directing secretion; that stretch reads MAMHLWLVTLTLVPLLGMDRELMVSA. The 56-residue stretch at 31–86 folds into the Kazal-like domain; the sequence is FPRMPFCEHMAELPNCPQTPNLICGTDGLTYENECHLCLTRMKTMKDIQIMKDGQC. Disulfide bonds link Cys-37-Cys-68, Cys-46-Cys-65, and Cys-54-Cys-86.

Expressed in the intestinal tract.

The protein localises to the secreted. The polypeptide is Serine protease inhibitor Kazal-type 4 (Spink4) (Mus musculus (Mouse)).